The chain runs to 209 residues: Small ribosomal subunit protein uS4 (209 aa).

The interval 22–45 (RGRNPLLRKPNPPGQHGMQRKKKS) is disordered. The S4 RNA-binding domain maps to 93–154 (CRLDNIVYRL…KSRRLAIVTE (62 aa)).

The protein belongs to the universal ribosomal protein uS4 family. Part of the 30S ribosomal subunit. Contacts protein S5. The interaction surface between S4 and S5 is involved in control of translational fidelity.

Its function is as follows. One of the primary rRNA binding proteins, it binds directly to 16S rRNA where it nucleates assembly of the body of the 30S subunit. In terms of biological role, with S5 and S12 plays an important role in translational accuracy. In Chlamydia muridarum (strain MoPn / Nigg), this protein is Small ribosomal subunit protein uS4.